We begin with the raw amino-acid sequence, 387 residues long: MDMNSFSPMMPTSPLSMINQIKFEDGPDLKDLFITVDAPESHVTTIETFITYRIVTKTSRGEFDSSEFEVRRRYQDFLWLKGKLEEAHPTLIIPPLPEKFIVKGMVERFNDDFIETRRKALHKFLNRIADHPTLTFNEDFKVFLTAQAEELSSYKKQGPGLLSRMGQTVRAVASSMRGVKNRPEEFMEMNNFIETFSQKINLIDKISQRIYKEERDYFDEMKEYGPIHILWSASEEELVDTLKGMAGCIEQCCKATEKRMAGLSEALLPVVHEYVLYSEMLVGVMKRRDQIQTELDSKVEALTYKKADIDLLTEEIGKLEDKVECANNALKADWERWKQNMKNDLRSAFTDTAEQNIRYYEQCLATWESFLTSQTDLPSEEDSEEKL.

Residues 30 to 151 (KDLFITVDAP…VFLTAQAEEL (122 aa)) enclose the PX domain. Residues Arg73, Gln75, Lys103, and Arg117 each coordinate a 1,2-diacyl-sn-glycero-3-phospho-(1D-myo-inositol-3-phosphate). One can recognise a BAR domain in the interval 178 to 387 (GVKNRPEEFM…PSEEDSEEKL (210 aa)).

It belongs to the sorting nexin family. As to quaternary structure, heterodimer; heterodimerizes with SNX4.

It localises to the early endosome membrane. Its function is as follows. Involved in the regulation of endocytosis and in several stages of intracellular trafficking. Together with SNX4, involved in autophagosome assembly by regulating trafficking and recycling of phospholipid scramblase ATG9A. The chain is Sorting nexin-7 from Mus musculus (Mouse).